The sequence spans 430 residues: N-lysine methyltransferase SMYD2-A (430 aa).

In terms of domain architecture, SET spans 5–239 (EGLERFDSPG…AGDEVFTSYI (235 aa)). Residue 15-17 (KGR) participates in S-adenosyl-L-methionine binding. The Zn(2+) site is built by Cys50, Cys53, Cys63, Cys66, Cys72, Cys76, His84, and Cys88. Residues 50 to 88 (CDFCFARKEGLSKCGKCKQAFYCNVDCQKGDWPMHKLEC) form an MYND-type zinc finger. S-adenosyl-L-methionine-binding positions include His135, 204–205 (NH), and 256–258 (YFF).

This sequence belongs to the class V-like SAM-binding methyltransferase superfamily.

The protein localises to the cytoplasm. It localises to the cytosol. It is found in the nucleus. The enzyme catalyses L-lysyl(4)-[histone H3] + 3 S-adenosyl-L-methionine = N(6),N(6),N(6)-trimethyl-L-lysyl(4)-[histone H3] + 3 S-adenosyl-L-homocysteine + 3 H(+). It carries out the reaction L-lysyl-[protein] + S-adenosyl-L-methionine = N(6)-methyl-L-lysyl-[protein] + S-adenosyl-L-homocysteine + H(+). Functionally, protein-lysine N-methyltransferase that methylates both histones and non-histone proteins, including p53/TP53 and RB1. Specifically trimethylates histone H3 'Lys-4' (H3K4me3) in vivo. The activity requires interaction with HSP90alpha. Shows even higher methyltransferase activity on p53/TP53. Monomethylates 'Lys-370' of p53/TP53, leading to decreased DNA-binding activity and subsequent transcriptional regulation activity of p53/TP53. Monomethylates RB1 at 'Lys-860'. This chain is N-lysine methyltransferase SMYD2-A (smyd2-a), found in Xenopus laevis (African clawed frog).